A 245-amino-acid chain; its full sequence is tRNA pseudouridine synthase A (245 aa).

The active-site Nucleophile is D52. Y111 provides a ligand contact to substrate.

It belongs to the tRNA pseudouridine synthase TruA family. As to quaternary structure, homodimer.

The catalysed reaction is uridine(38/39/40) in tRNA = pseudouridine(38/39/40) in tRNA. Formation of pseudouridine at positions 38, 39 and 40 in the anticodon stem and loop of transfer RNAs. This chain is tRNA pseudouridine synthase A, found in Rhodospirillum centenum (strain ATCC 51521 / SW).